The sequence spans 436 residues: Proline--tRNA ligase (436 aa).

This sequence belongs to the class-II aminoacyl-tRNA synthetase family. ProS type 2 subfamily. As to quaternary structure, homodimer.

The protein resides in the cytoplasm. The catalysed reaction is tRNA(Pro) + L-proline + ATP = L-prolyl-tRNA(Pro) + AMP + diphosphate. Functionally, catalyzes the attachment of proline to tRNA(Pro) in a two-step reaction: proline is first activated by ATP to form Pro-AMP and then transferred to the acceptor end of tRNA(Pro). The chain is Proline--tRNA ligase from Neorickettsia sennetsu (strain ATCC VR-367 / Miyayama) (Ehrlichia sennetsu).